The following is a 311-amino-acid chain: Ribose-phosphate pyrophosphokinase (311 aa).

ATP is bound by residues 37-39 and 96-97; these read DGE and RQ. Residues histidine 130 and aspartate 170 each coordinate Mg(2+). The active site involves lysine 193. D-ribose 5-phosphate-binding positions include arginine 195, aspartate 219, and 223–227; that span reads DTAGT.

It belongs to the ribose-phosphate pyrophosphokinase family. Class I subfamily. In terms of assembly, homohexamer. Mg(2+) is required as a cofactor.

Its subcellular location is the cytoplasm. It carries out the reaction D-ribose 5-phosphate + ATP = 5-phospho-alpha-D-ribose 1-diphosphate + AMP + H(+). Its pathway is metabolic intermediate biosynthesis; 5-phospho-alpha-D-ribose 1-diphosphate biosynthesis; 5-phospho-alpha-D-ribose 1-diphosphate from D-ribose 5-phosphate (route I): step 1/1. In terms of biological role, involved in the biosynthesis of the central metabolite phospho-alpha-D-ribosyl-1-pyrophosphate (PRPP) via the transfer of pyrophosphoryl group from ATP to 1-hydroxyl of ribose-5-phosphate (Rib-5-P). The polypeptide is Ribose-phosphate pyrophosphokinase (Aquifex aeolicus (strain VF5)).